A 250-amino-acid polypeptide reads, in one-letter code: Ribonuclease HII (250 aa).

In terms of domain architecture, RNase H type-2 spans 66 to 250 (QLVAGVDEVG…SFAPVSEYEK (185 aa)). Residues Asp-72, Glu-73, and Asp-164 each contribute to the a divalent metal cation site.

This sequence belongs to the RNase HII family. Mn(2+) serves as cofactor. Requires Mg(2+) as cofactor.

The protein resides in the cytoplasm. The enzyme catalyses Endonucleolytic cleavage to 5'-phosphomonoester.. Endonuclease that specifically degrades the RNA of RNA-DNA hybrids. The chain is Ribonuclease HII from Lactobacillus johnsonii (strain CNCM I-12250 / La1 / NCC 533).